The primary structure comprises 351 residues: O-methyltransferase apf6 (351 aa).

S-adenosyl-L-methionine-binding positions include 231-232 (GG), 279-280 (NF), and arginine 295. The Proton acceptor role is filled by histidine 299.

It belongs to the class I-like SAM-binding methyltransferase superfamily. Cation-independent O-methyltransferase family.

The protein operates within secondary metabolite biosynthesis. Its function is as follows. O-methyltransferase; part of the gene cluster that mediates the biosynthesis of the cyclic tetrapeptide apicidin F (APF). The non-ribosomal peptide synthetase apf1 incorporates four different amino acids to produce apicidin F: L-phenylalanine, D-pipecolic acid (D-pip), N-methoxy-L-tryptophan and L-2-aminooctanedioic acid. L-Phenylalanine is the only proteinogenic amino acid directly used by apf1. The 3 other apf1 substrates are non-proteinogenic and have to be modified by other enzymes of the cluster. Lysine is converted to delta-1-pyrroline-5-carboxylate (P5C) which is reduced to L-pipecolic acid (L-pip) by apf3. L-pip is epimerized to D-pip, probably by apf1 activity, prior to incorporation. L-Tryptophan is N-oxidyzed by one of the cytochrome P450 monooxygenases (apf7 or apf8), and further methylated at the hydroxy group by the O-methyltransferase apf6 to yield N-methoxy-L-tryptophan. The synthesis of the fourth apf1 substrate is more complex. The fatty acid synthase apf5 is involved in the synthesis of the octanoic acid backbone of L-2-aminooctanedioic acid by fixing one acetyl-CoA unit and three malonyl-CoA units. Then one of the cytochrome P450 monooxygenases (apf7 or apf8) may oxidize this backbone to 2-oxooctanoic acid. The aminotransferase apf4 is predicted to catalyze the exchange of the keto group with an amino group. The next step would be the oxidation of 2-aminooctanoic acid by one of the cytochrome P450 monooxygenases (apf7 or apf8). The last step is the oxidation of 2-amino-8-hydroxyoctanoic acid to 2-aminooctanedioic acid is catalyzed by the FAD-dependent monooxygenase apf9. This Gibberella fujikuroi (strain CBS 195.34 / IMI 58289 / NRRL A-6831) (Bakanae and foot rot disease fungus) protein is O-methyltransferase apf6.